A 376-amino-acid chain; its full sequence is Palmitoyltransferase PFA4 (376 aa).

The Cytoplasmic segment spans residues 1–11; the sequence is MPVKLKWPWLG. A helical membrane pass occupies residues 12–32; that stretch reads IAIPSFLIASIGYCAHYFILL. At 33 to 40 the chain is on the lumenal side; the sequence is NFLSLRKQ. A helical transmembrane segment spans residues 41–61; that stretch reads LWYQFCQTMIWLSYYLAIYTP. The Cytoplasmic segment spans residues 62–122; that stretch reads PGKPPTNFKP…NCVGYNNFPH (61 aa). The DHHC domain maps to 78 to 128; that stretch reads VYCKKCKCYKPERSHHCKTCNQCVLMMDHHCPWTMNCVGYNNFPHFIRFLF. The active-site S-palmitoyl cysteine intermediate is cysteine 108. Residues 123-143 traverse the membrane as a helical segment; sequence FIRFLFWVIVGTTSLAIFLTT. The Lumenal segment spans residues 144 to 163; the sequence is RIHSIWVHRSSPSYLYYKSE. A helical transmembrane segment spans residues 164–184; it reads LIFLTILTPLNAFILLTISIL. The Cytoplasmic segment spans residues 185–376; that stretch reads MIRCLFNQIF…EDFGVDVDVE (192 aa).

Belongs to the DHHC palmitoyltransferase family. PFA4 subfamily.

The protein resides in the endoplasmic reticulum membrane. It catalyses the reaction L-cysteinyl-[protein] + hexadecanoyl-CoA = S-hexadecanoyl-L-cysteinyl-[protein] + CoA. In terms of biological role, mediates the reversible addition of palmitate to target proteins, thereby regulating their membrane association and biological function. The polypeptide is Palmitoyltransferase PFA4 (Candida glabrata (strain ATCC 2001 / BCRC 20586 / JCM 3761 / NBRC 0622 / NRRL Y-65 / CBS 138) (Yeast)).